The chain runs to 39 residues: Potassium channel toxin alpha-KTx 2.16 (39 aa).

3 cysteine pairs are disulfide-bonded: C7-C29, C13-C34, and C17-C36. An Isoleucine amide modification is found at I39.

The protein belongs to the short scorpion toxin superfamily. Potassium channel inhibitor family. Alpha-KTx 02 subfamily. Expressed by the venom gland.

The protein resides in the secreted. In terms of biological role, blocks human voltage-gated potassium channels Kv1.2/KCNA2 (IC(50)=0.7 nM), Kv1.3/KCNA3 (IC(50)=26.2 nM) and blocks intermediate conductance calcium-activated potassium channel KCa3.1/KCNN4 (IC(50)=56 nM). The chain is Potassium channel toxin alpha-KTx 2.16 from Centruroides tecomanus (Scorpion).